A 404-amino-acid chain; its full sequence is Probable ketol-acid reductoisomerase, mitochondrial (404 aa).

Residues 63 to 253 (TKENVWERSD…AVGSGFIYQT (191 aa)) enclose the KARI N-terminal Rossmann domain. NADP(+) contacts are provided by residues 91–100 (GYGSQGHGQG), 115–120 (RKDGAS), and 153–157 (SDAAQ). The active site involves His-178. One can recognise a KARI C-terminal knotted domain in the interval 254–401 (TFKKEVISDL…EVVRSLRPEH (148 aa)). Position 261 is a phosphoserine (Ser-261). Positions 262, 266, 298, and 302 each coordinate Mg(2+). A substrate-binding site is contributed by Ser-324.

It belongs to the ketol-acid reductoisomerase family. Requires Mg(2+) as cofactor.

The protein localises to the mitochondrion. It carries out the reaction (2R)-2,3-dihydroxy-3-methylbutanoate + NADP(+) = (2S)-2-acetolactate + NADPH + H(+). The catalysed reaction is (2R,3R)-2,3-dihydroxy-3-methylpentanoate + NADP(+) = (S)-2-ethyl-2-hydroxy-3-oxobutanoate + NADPH + H(+). It functions in the pathway amino-acid biosynthesis; L-isoleucine biosynthesis; L-isoleucine from 2-oxobutanoate: step 2/4. It participates in amino-acid biosynthesis; L-valine biosynthesis; L-valine from pyruvate: step 2/4. This is Probable ketol-acid reductoisomerase, mitochondrial (ilv5) from Schizosaccharomyces pombe (strain 972 / ATCC 24843) (Fission yeast).